The chain runs to 521 residues: UDP-N-acetylmuramoyl-L-alanyl-D-glutamate--2,6-diaminopimelate ligase (521 aa).

Ser33 contributes to the UDP-N-acetyl-alpha-D-muramoyl-L-alanyl-D-glutamate binding site. Gly116–Thr122 contributes to the ATP binding site. Residues Thr158–Thr159, Ser185, Gln191, and Arg193 contribute to the UDP-N-acetyl-alpha-D-muramoyl-L-alanyl-D-glutamate site. Position 225 is an N6-carboxylysine (Lys225). Meso-2,6-diaminopimelate is bound by residues Arg409, Asp433–Arg436, Gly483, and Glu487. Residues Asp433–Arg436 carry the Meso-diaminopimelate recognition motif motif.

Belongs to the MurCDEF family. MurE subfamily. Mg(2+) serves as cofactor. In terms of processing, carboxylation is probably crucial for Mg(2+) binding and, consequently, for the gamma-phosphate positioning of ATP.

Its subcellular location is the cytoplasm. The catalysed reaction is UDP-N-acetyl-alpha-D-muramoyl-L-alanyl-D-glutamate + meso-2,6-diaminopimelate + ATP = UDP-N-acetyl-alpha-D-muramoyl-L-alanyl-gamma-D-glutamyl-meso-2,6-diaminopimelate + ADP + phosphate + H(+). Its pathway is cell wall biogenesis; peptidoglycan biosynthesis. Catalyzes the addition of meso-diaminopimelic acid to the nucleotide precursor UDP-N-acetylmuramoyl-L-alanyl-D-glutamate (UMAG) in the biosynthesis of bacterial cell-wall peptidoglycan. The polypeptide is UDP-N-acetylmuramoyl-L-alanyl-D-glutamate--2,6-diaminopimelate ligase (Nitrosomonas europaea (strain ATCC 19718 / CIP 103999 / KCTC 2705 / NBRC 14298)).